The sequence spans 149 residues: Protein FAM72A (149 aa).

The protein belongs to the FAM72 family. In terms of assembly, interacts with UNG. In terms of tissue distribution, expressed at high levels in stomach and also in kidney and, at low levels, in heart (at protein level). In the stomach, highly expressed in foveolar cells, parietal cells and chief cells (at protein level). In kidney, expressed in endothelial cells, mesangial and epithelial cells (parietal and visceral epithelium) around glomerulus (at protein level).

The protein resides in the cytoplasm. The protein localises to the mitochondrion. Functionally, may play a role in the regulation of cellular reactive oxygen species metabolism. May participate in cell growth regulation. This chain is Protein FAM72A (Fam72a), found in Rattus norvegicus (Rat).